The primary structure comprises 132 residues: Small ribosomal subunit protein uS8 (132 aa).

The protein belongs to the universal ribosomal protein uS8 family. As to quaternary structure, part of the 30S ribosomal subunit. Contacts proteins S5 and S12.

Its function is as follows. One of the primary rRNA binding proteins, it binds directly to 16S rRNA central domain where it helps coordinate assembly of the platform of the 30S subunit. This is Small ribosomal subunit protein uS8 from Rhodopseudomonas palustris (strain BisB18).